Consider the following 182-residue polypeptide: Ribosome-recycling factor (182 aa).

It belongs to the RRF family.

It localises to the cytoplasm. Its function is as follows. Responsible for the release of ribosomes from messenger RNA at the termination of protein biosynthesis. May increase the efficiency of translation by recycling ribosomes from one round of translation to another. The sequence is that of Ribosome-recycling factor from Picosynechococcus sp. (strain ATCC 27264 / PCC 7002 / PR-6) (Agmenellum quadruplicatum).